The following is a 283-amino-acid chain: Putative replication protein XF_b0001 (283 aa).

The sequence is that of Putative replication protein XF_b0001 from Xylella fastidiosa (strain 9a5c).